A 519-amino-acid chain; its full sequence is UvrABC system protein C (519 aa).

The region spanning 9–87 (HLPGCYLFKN…IKKHWPRYNI (79 aa)) is the GIY-YIG domain. Residues 191–226 (RELIESMEKDMRELASRQQFEQAMALRDEIAALEYL) form the UVR domain.

This sequence belongs to the UvrC family. Interacts with UvrB in an incision complex.

It localises to the cytoplasm. The UvrABC repair system catalyzes the recognition and processing of DNA lesions. UvrC both incises the 5' and 3' sides of the lesion. The N-terminal half is responsible for the 3' incision and the C-terminal half is responsible for the 5' incision. The chain is UvrABC system protein C from Methanosarcina barkeri (strain Fusaro / DSM 804).